The chain runs to 317 residues: Acetyl-coenzyme A carboxylase carboxyl transferase subunit alpha (317 aa).

In terms of domain architecture, CoA carboxyltransferase C-terminal spans 33-294; it reads NLDDEITRLQ…KKRLLADLAD (262 aa).

This sequence belongs to the AccA family. As to quaternary structure, acetyl-CoA carboxylase is a heterohexamer composed of biotin carboxyl carrier protein (AccB), biotin carboxylase (AccC) and two subunits each of ACCase subunit alpha (AccA) and ACCase subunit beta (AccD).

It is found in the cytoplasm. It catalyses the reaction N(6)-carboxybiotinyl-L-lysyl-[protein] + acetyl-CoA = N(6)-biotinyl-L-lysyl-[protein] + malonyl-CoA. It functions in the pathway lipid metabolism; malonyl-CoA biosynthesis; malonyl-CoA from acetyl-CoA: step 1/1. Its function is as follows. Component of the acetyl coenzyme A carboxylase (ACC) complex. First, biotin carboxylase catalyzes the carboxylation of biotin on its carrier protein (BCCP) and then the CO(2) group is transferred by the carboxyltransferase to acetyl-CoA to form malonyl-CoA. The polypeptide is Acetyl-coenzyme A carboxylase carboxyl transferase subunit alpha (Histophilus somni (strain 2336) (Haemophilus somnus)).